The chain runs to 318 residues: Beta-sarcoglycan (318 aa).

Residues 1–32 (MAAAAAAAAEQQSSNGPVKKSMREKAVERRNV) form a disordered region. Residues 1–65 (MAAAAAAAAE…GLRGRKGNLA (65 aa)) are Cytoplasmic-facing. A compositionally biased stretch (basic and acidic residues) spans 21-32 (SMREKAVERRNV). Residues 66–86 (ICVIVLLFLLAVINLIITLVI) traverse the membrane as a helical; Signal-anchor for type II membrane protein segment. At 87–318 (WAVIRIGPNG…VSDNPCGNTH (232 aa)) the chain is on the extracellular side. N-linked (GlcNAc...) asparagine glycosylation is found at asparagine 158, asparagine 211, and asparagine 258. 2 disulfide bridges follow: cysteine 288–cysteine 314 and cysteine 290–cysteine 307.

It belongs to the sarcoglycan beta/delta/gamma/zeta family. Cross-link to form 2 major subcomplexes: one consisting of SGCB, SGCD and SGCG and the other consisting of SGCB and SGCD. The association between SGCB and SGCG is particularly strong while SGCA is loosely associated with the other sarcoglycans. Post-translationally, disulfide bonds are present.

It localises to the cell membrane. The protein resides in the sarcolemma. The protein localises to the cytoplasm. Its subcellular location is the cytoskeleton. Its function is as follows. Component of the sarcoglycan complex, a subcomplex of the dystrophin-glycoprotein complex which forms a link between the F-actin cytoskeleton and the extracellular matrix. This chain is Beta-sarcoglycan (SGCB), found in Oryctolagus cuniculus (Rabbit).